Here is a 149-residue protein sequence, read N- to C-terminus: Flagellar assembly factor FliW (149 aa).

The protein belongs to the FliW family. Interacts with translational regulator CsrA and flagellin(s).

Its subcellular location is the cytoplasm. Its function is as follows. Acts as an anti-CsrA protein, binds CsrA and prevents it from repressing translation of its target genes, one of which is flagellin. Binds to flagellin and participates in the assembly of the flagellum. In Thermotoga petrophila (strain ATCC BAA-488 / DSM 13995 / JCM 10881 / RKU-1), this protein is Flagellar assembly factor FliW.